Here is a 236-residue protein sequence, read N- to C-terminus: 7-cyano-7-deazaguanine synthase 2 (236 aa).

Phe-11–Leu-21 contacts ATP. Zn(2+) contacts are provided by Cys-199, Cys-214, Cys-217, and Cys-220.

It belongs to the QueC family. The cofactor is Zn(2+).

The catalysed reaction is 7-carboxy-7-deazaguanine + NH4(+) + ATP = 7-cyano-7-deazaguanine + ADP + phosphate + H2O + H(+). It functions in the pathway purine metabolism; 7-cyano-7-deazaguanine biosynthesis. Catalyzes the ATP-dependent conversion of 7-carboxy-7-deazaguanine (CDG) to 7-cyano-7-deazaguanine (preQ(0)). The polypeptide is 7-cyano-7-deazaguanine synthase 2 (Sphingopyxis alaskensis (strain DSM 13593 / LMG 18877 / RB2256) (Sphingomonas alaskensis)).